Consider the following 126-residue polypeptide: Aspartate 1-decarboxylase (126 aa).

Ser-25 (schiff-base intermediate with substrate; via pyruvic acid) is an active-site residue. Pyruvic acid (Ser) is present on Ser-25. Thr-57 provides a ligand contact to substrate. The active-site Proton donor is the Tyr-58. Residue 73-75 participates in substrate binding; it reads GAA.

Belongs to the PanD family. As to quaternary structure, heterooctamer of four alpha and four beta subunits. Pyruvate serves as cofactor. Post-translationally, is synthesized initially as an inactive proenzyme, which is activated by self-cleavage at a specific serine bond to produce a beta-subunit with a hydroxyl group at its C-terminus and an alpha-subunit with a pyruvoyl group at its N-terminus.

The protein resides in the cytoplasm. It carries out the reaction L-aspartate + H(+) = beta-alanine + CO2. Its pathway is cofactor biosynthesis; (R)-pantothenate biosynthesis; beta-alanine from L-aspartate: step 1/1. In terms of biological role, catalyzes the pyruvoyl-dependent decarboxylation of aspartate to produce beta-alanine. This chain is Aspartate 1-decarboxylase, found in Psychrobacter arcticus (strain DSM 17307 / VKM B-2377 / 273-4).